The following is a 248-amino-acid chain: Protein STPG4 (248 aa).

In terms of assembly, interacts with histone H3. Interacts with histone H4.

It is found in the cytoplasm. The protein resides in the nucleus. In terms of biological role, maternal factor that plays a role in epigenetic chromatin reprogramming during early development of the zygote. Involved in the regulation of gametic DNA demethylation by inducing the conversion of the modified genomic base 5-methylcytosine (5mC) into 5-hydroxymethylcytosine (5hmC). This chain is Protein STPG4, found in Homo sapiens (Human).